The chain runs to 182 residues: uncharacterized protein (182 aa).

This is an uncharacterized protein from Acanthamoeba polyphaga mimivirus (APMV).